Here is a 1201-residue protein sequence, read N- to C-terminus: Protein dduB (1201 aa).

The signal sequence occupies residues 1-22; it reads MKFIKYLLILFLILKINYFVES. Over 23-1180 the chain is Extracellular; the sequence is GVDCQKNTEY…QDPSDELSTS (1158 aa). N-linked (GlcNAc...) asparagine glycosylation is found at Asn68, Asn122, Asn150, Asn185, Asn283, Asn348, Asn360, Asn437, Asn448, Asn518, Asn535, Asn554, Asn585, Asn631, Asn759, Asn815, Asn830, Asn844, Asn946, Asn1042, Asn1058, Asn1098, and Asn1108. The chain crosses the membrane as a helical span at residues 1181–1201; sequence SFIQLNILSLLLISIFTIFIL.

Its subcellular location is the membrane. In Dictyostelium discoideum (Social amoeba), this protein is Protein dduB (dduB).